A 620-amino-acid chain; its full sequence is uncharacterized protein (620 aa).

2 stretches are compositionally biased toward low complexity: residues 278 to 290 and 301 to 319; these read RPPS…AGEP and ASTA…TRPT. Residues 278 to 620 are disordered; the sequence is RPPSGSGEAA…KSQPPAAHTA (343 aa). A compositionally biased stretch (basic and acidic residues) spans 336 to 411; it reads ARPESEEQTD…QESQVARRDE (76 aa). Composition is skewed to pro residues over residues 446 to 470 and 481 to 500; these read VPGP…PPMT and RCPP…PPRP. 2 stretches are compositionally biased toward low complexity: residues 501 to 512 and 522 to 541; these read SSDTPLSAVSRP and TARV…YSPA. Residues 542-551 are compositionally biased toward pro residues; the sequence is PLSPPSPVSP. Low complexity predominate over residues 597–607; sequence SVPSSASPSAS.

Belongs to the herpesviridae US22 family.

This is an uncharacterized protein from Homo sapiens (Human).